The sequence spans 488 residues: Probable malate:quinone oxidoreductase (488 aa).

Belongs to the MQO family. Requires FAD as cofactor.

The enzyme catalyses (S)-malate + a quinone = a quinol + oxaloacetate. The protein operates within carbohydrate metabolism; tricarboxylic acid cycle; oxaloacetate from (S)-malate (quinone route): step 1/1. The polypeptide is Probable malate:quinone oxidoreductase (Neisseria meningitidis serogroup C (strain 053442)).